A 359-amino-acid chain; its full sequence is Histidinol-phosphate aminotransferase (359 aa).

Residue Lys-217 is modified to N6-(pyridoxal phosphate)lysine.

The protein belongs to the class-II pyridoxal-phosphate-dependent aminotransferase family. Histidinol-phosphate aminotransferase subfamily. As to quaternary structure, homodimer. Requires pyridoxal 5'-phosphate as cofactor.

It catalyses the reaction L-histidinol phosphate + 2-oxoglutarate = 3-(imidazol-4-yl)-2-oxopropyl phosphate + L-glutamate. Its pathway is amino-acid biosynthesis; L-histidine biosynthesis; L-histidine from 5-phospho-alpha-D-ribose 1-diphosphate: step 7/9. The chain is Histidinol-phosphate aminotransferase from Salmonella typhi.